The primary structure comprises 299 residues: Nucleotide-binding protein Moth_0258 (299 aa).

Position 14-21 (14-21) interacts with ATP; sequence GLSGAGKT. 68–71 contributes to the GTP binding site; it reads DIRG.

It belongs to the RapZ-like family.

Displays ATPase and GTPase activities. The polypeptide is Nucleotide-binding protein Moth_0258 (Moorella thermoacetica (strain ATCC 39073 / JCM 9320)).